The primary structure comprises 419 residues: O-methyltransferase gsfB (419 aa).

Residues 255–256, aspartate 278, 300–301, and arginine 316 contribute to the S-adenosyl-L-methionine site; these read GG and DF. The active-site Proton acceptor is the histidine 320.

It belongs to the class I-like SAM-binding methyltransferase superfamily. Cation-independent O-methyltransferase family.

It carries out the reaction 2-(2,4-dihydroxy-6-oxidobenzoyl)-5-hydroxy-3-methylbenzenolate + S-adenosyl-L-methionine = griseophenone D + S-adenosyl-L-homocysteine + H(+). Its pathway is secondary metabolite biosynthesis; terpenoid biosynthesis. Its function is as follows. O-methyltransferase; part of the gene cluster that mediates the biosynthesis of griseofulvin, an important antifungal drug that has been in use for a long time for treating dermatophyte infections. The first step of the pathway is the formation of the heptaketide backbone by gsfA which is initiated by priming with acetyl-CoA, followed by sequential condensations of 6 malonyl-CoA units. The resulting benzophenone can undergo a spontaneous dehydration to form norlichexanthone. However, the true precursor for the griseofulvin biosynthesis is not norlichexanthone, but the heptaketide benzophenone that is O-methylated at 3-OH by gsfB to produce griseophenone D which is further methylated at 9-OH by gsfC to yield griseophenone C. Griseophenone C is then substrate of halogenase gsfI which is responsible for the regio-specific chlorination at the C13 position to form griseophenone B. The cytochrome P450 gsfF catalyzes the coupling of orcinol and phloroglucinol rings in griseophenone B to form desmethyl-dehydrogriseofulvin A which is further methylated at 5-OH by gsfD to yield dehydrogriseofulvin. Finally, gsfE performs stereospecific reduction of enone 18 of dehydrogriseofulvin to afford the final product griseofulvin. In Penicillium aethiopicum, this protein is O-methyltransferase gsfB.